Consider the following 1641-residue polypeptide: Vitellogenin-1 (1641 aa).

The first 18 residues, 1-18 (MWYLAFLLIIGAYAADHA), serve as a signal peptide directing secretion. Residues 19–790 (WETGNEYHYL…SQDTTVPKSS (772 aa)) enclose the Vitellogenin domain. C172 and C211 form a disulfide bridge. The span at 322 to 334 (LRQPSVSLNSMEA) shows a compositional bias: polar residues. Residues 322–372 (LRQPSVSLNSMEARSSENSNEENRSDDDRSNFLSNSGEEREYLQSKPTLNE) are disordered. A compositionally biased stretch (basic and acidic residues) spans 342-351 (EENRSDDDRS). 13 N-linked (GlcNAc...) asparagine glycosylation sites follow: N344, N549, N566, N831, N875, N898, N1001, N1053, N1268, N1393, N1396, N1505, and N1523. Residues 1410 to 1597 (ESVCVLDKTH…TYAMTQESCQ (188 aa)) form the VWFD domain. Cysteines 1435 and 1596 form a disulfide. The segment at 1594–1641 (ESCQGPAPENKRKAEQSTCMSRSYRPSDVISDREAGRSSTKNRGWGYH) is disordered.

As to expression, hemolymph.

Its subcellular location is the secreted. Functionally, precursor of the egg-yolk proteins that are sources of nutrients during embryonic development. The polypeptide is Vitellogenin-1 (Solenopsis invicta (Red imported fire ant)).